The primary structure comprises 243 residues: Small ribosomal subunit protein uS3 (243 aa).

The KH type-2 domain occupies 39–110; the sequence is IRTFIQKKYG…QVRINVVEVE (72 aa). The interval 216-243 is disordered; the sequence is KTIPVGASPKRKAGRRPQQFEDRSNENS. The span at 233 to 243 shows a compositional bias: basic and acidic residues; that stretch reads QQFEDRSNENS.

The protein belongs to the universal ribosomal protein uS3 family. In terms of assembly, part of the 30S ribosomal subunit. Forms a tight complex with proteins S10 and S14.

In terms of biological role, binds the lower part of the 30S subunit head. Binds mRNA in the 70S ribosome, positioning it for translation. In Prochlorococcus marinus (strain MIT 9312), this protein is Small ribosomal subunit protein uS3.